The sequence spans 123 residues: Integration host factor subunit alpha (123 aa).

The protein belongs to the bacterial histone-like protein family. As to quaternary structure, heterodimer of an alpha and a beta chain.

This protein is one of the two subunits of integration host factor, a specific DNA-binding protein that functions in genetic recombination as well as in transcriptional and translational control. The sequence is that of Integration host factor subunit alpha from Polaromonas naphthalenivorans (strain CJ2).